A 335-amino-acid polypeptide reads, in one-letter code: Probable cytosolic iron-sulfur protein assembly protein Ciao1 (335 aa).

WD repeat units follow at residues 12-51 (GHKG…WSTK), 57-96 (GHKR…FECN), 101-140 (GHEN…EFEC), 146-185 (PHTQ…NDWD), 192-231 (SHTS…NTAG), 250-289 (QHSR…KPDE), and 301-335 (AHDQ…KVSE).

Belongs to the WD repeat CIA1 family.

In terms of biological role, essential component of the cytosolic iron-sulfur (Fe/S) protein assembly machinery. Required for the maturation of extramitochondrial Fe/S proteins. The protein is Probable cytosolic iron-sulfur protein assembly protein Ciao1 of Drosophila simulans (Fruit fly).